A 456-amino-acid polypeptide reads, in one-letter code: Bifunctional protein GlmU (456 aa).

Positions 1–229 are pyrophosphorylase; that stretch reads MSNSAMSVVI…LSEVEGVNNR (229 aa). Residues 11–14, Lys25, Gln76, 81–82, 103–105, Gly140, Glu154, Asn169, and Asn227 each bind UDP-N-acetyl-alpha-D-glucosamine; these read LAAG, GT, and YGD. Mg(2+) is bound at residue Asp105. Asn227 is a Mg(2+) binding site. Residues 230–250 form a linker region; that stretch reads LQLSALERVYQREQADRLLLA. Residues 251–456 form an N-acetyltransferase region; the sequence is GVMLLDPARF…SGWQRPVKKK (206 aa). UDP-N-acetyl-alpha-D-glucosamine-binding residues include Arg333 and Lys351. His363 serves as the catalytic Proton acceptor. 2 residues coordinate UDP-N-acetyl-alpha-D-glucosamine: Tyr366 and Asn377. Residues Ala380, 386–387, Ser405, Ala423, and Arg440 contribute to the acetyl-CoA site; that span reads NY.

This sequence in the N-terminal section; belongs to the N-acetylglucosamine-1-phosphate uridyltransferase family. In the C-terminal section; belongs to the transferase hexapeptide repeat family. Homotrimer. The cofactor is Mg(2+).

The protein resides in the cytoplasm. The catalysed reaction is alpha-D-glucosamine 1-phosphate + acetyl-CoA = N-acetyl-alpha-D-glucosamine 1-phosphate + CoA + H(+). It catalyses the reaction N-acetyl-alpha-D-glucosamine 1-phosphate + UTP + H(+) = UDP-N-acetyl-alpha-D-glucosamine + diphosphate. Its pathway is nucleotide-sugar biosynthesis; UDP-N-acetyl-alpha-D-glucosamine biosynthesis; N-acetyl-alpha-D-glucosamine 1-phosphate from alpha-D-glucosamine 6-phosphate (route II): step 2/2. The protein operates within nucleotide-sugar biosynthesis; UDP-N-acetyl-alpha-D-glucosamine biosynthesis; UDP-N-acetyl-alpha-D-glucosamine from N-acetyl-alpha-D-glucosamine 1-phosphate: step 1/1. It participates in bacterial outer membrane biogenesis; LPS lipid A biosynthesis. In terms of biological role, catalyzes the last two sequential reactions in the de novo biosynthetic pathway for UDP-N-acetylglucosamine (UDP-GlcNAc). The C-terminal domain catalyzes the transfer of acetyl group from acetyl coenzyme A to glucosamine-1-phosphate (GlcN-1-P) to produce N-acetylglucosamine-1-phosphate (GlcNAc-1-P), which is converted into UDP-GlcNAc by the transfer of uridine 5-monophosphate (from uridine 5-triphosphate), a reaction catalyzed by the N-terminal domain. The protein is Bifunctional protein GlmU of Pectobacterium carotovorum subsp. carotovorum (strain PC1).